The chain runs to 141 residues: Large ribosomal subunit protein uL6 (141 aa).

Belongs to the universal ribosomal protein uL6 family.

This is Large ribosomal subunit protein uL6 from Haemonchus contortus (Barber pole worm).